Reading from the N-terminus, the 348-residue chain is MEMSFRWYGEDDPVTLENIRQIPTMKGIVTAIYDVPVGEVWPRERIQQLKETVEASGLKISVIESVPVHEDIKLGRPTRDVLIDNYIQTIKNLAAEGIDTICYNFMPVFDWTRTDLAYEYPDGSTALIFDEEVSKKMDPVNGELSLPGWDSSYTKEEMRAIMDAYADVDEEKLWEHLEYFIKRIIPEAEAVGVKMAIHPDDPPYSIFGLPRIITGLDSVERFVNLYDSKSNGITLCVGSYASDPKNDVLEISRRAFELNRVNFVHARNIKLGEGKSFKESAHPSEYGSIDMYEVIKLCHEFGFEGAIRPDHGRMIWGETGRPGYGLYDRALGATYLSGLYEAVVKAAK.

It belongs to the mannonate dehydratase family. The cofactor is Fe(2+). Mn(2+) serves as cofactor.

The catalysed reaction is D-mannonate = 2-dehydro-3-deoxy-D-gluconate + H2O. It functions in the pathway carbohydrate metabolism; pentose and glucuronate interconversion. Catalyzes the dehydration of D-mannonate. This is Mannonate dehydratase from Streptococcus uberis (strain ATCC BAA-854 / 0140J).